A 1058-amino-acid chain; its full sequence is Carbamoyl phosphate synthase large chain (1058 aa).

The segment at 1–399 (MPIDKDIKKV…AIQKAIRSLD (399 aa)) is carboxyphosphate synthetic domain. Positions 127, 167, 173, 174, 206, 208, 213, 239, 240, 241, 282, and 296 each coordinate ATP. The region spanning 131-325 (GHFMDKLNEP…IAKISSKIAL (195 aa)) is the ATP-grasp 1 domain. Mg(2+) contacts are provided by Q282, E296, and N298. Positions 282, 296, and 298 each coordinate Mn(2+). Positions 400-538 (MGHDGFEYVE…YSTYDSGNEL (139 aa)) are oligomerization domain. The tract at residues 539-924 (KSSNKKKIVI…YKSQLAAGMD (386 aa)) is carbamoyl phosphate synthetic domain. In terms of domain architecture, ATP-grasp 2 spans 663–856 (AKLLNKLHIH…LAKVATWIMT (194 aa)). Positions 699, 738, 740, 745, 770, 771, 772, 773, 813, and 827 each coordinate ATP. The Mg(2+) site is built by Q813, E827, and N829. Q813, E827, and N829 together coordinate Mn(2+). One can recognise an MGS-like domain in the interval 923–1058 (MDLPKEGKIF…KSLNEHIDGE (136 aa)). Residues 925-1058 (LPKEGKIFIS…KSLNEHIDGE (134 aa)) form an allosteric domain region.

It belongs to the CarB family. Composed of two chains; the small (or glutamine) chain promotes the hydrolysis of glutamine to ammonia, which is used by the large (or ammonia) chain to synthesize carbamoyl phosphate. Tetramer of heterodimers (alpha,beta)4. The cofactor is Mg(2+). It depends on Mn(2+) as a cofactor.

It carries out the reaction hydrogencarbonate + L-glutamine + 2 ATP + H2O = carbamoyl phosphate + L-glutamate + 2 ADP + phosphate + 2 H(+). The catalysed reaction is hydrogencarbonate + NH4(+) + 2 ATP = carbamoyl phosphate + 2 ADP + phosphate + 2 H(+). It participates in amino-acid biosynthesis; L-arginine biosynthesis; carbamoyl phosphate from bicarbonate: step 1/1. The protein operates within pyrimidine metabolism; UMP biosynthesis via de novo pathway; (S)-dihydroorotate from bicarbonate: step 1/3. Functionally, large subunit of the glutamine-dependent carbamoyl phosphate synthetase (CPSase). CPSase catalyzes the formation of carbamoyl phosphate from the ammonia moiety of glutamine, carbonate, and phosphate donated by ATP, constituting the first step of 2 biosynthetic pathways, one leading to arginine and/or urea and the other to pyrimidine nucleotides. The large subunit (synthetase) binds the substrates ammonia (free or transferred from glutamine from the small subunit), hydrogencarbonate and ATP and carries out an ATP-coupled ligase reaction, activating hydrogencarbonate by forming carboxy phosphate which reacts with ammonia to form carbamoyl phosphate. The polypeptide is Carbamoyl phosphate synthase large chain (Methanobrevibacter smithii (strain ATCC 35061 / DSM 861 / OCM 144 / PS)).